The following is a 558-amino-acid chain: ATP synthase subunit alpha (558 aa).

Residue 172 to 179 (GDRKTGKT) participates in ATP binding. Residues 536-558 (ESVKVHQAIPAKTSEKSKNSTPR) form a disordered region. Positions 548-558 (TSEKSKNSTPR) are enriched in basic and acidic residues.

It belongs to the ATPase alpha/beta chains family. F-type ATPases have 2 components, CF(1) - the catalytic core - and CF(0) - the membrane proton channel. CF(1) has five subunits: alpha(3), beta(3), gamma(1), delta(1), epsilon(1). CF(0) has three main subunits: a(1), b(2) and c(9-12). The alpha and beta chains form an alternating ring which encloses part of the gamma chain. CF(1) is attached to CF(0) by a central stalk formed by the gamma and epsilon chains, while a peripheral stalk is formed by the delta and b chains.

The protein resides in the cell membrane. It catalyses the reaction ATP + H2O + 4 H(+)(in) = ADP + phosphate + 5 H(+)(out). Functionally, produces ATP from ADP in the presence of a proton gradient across the membrane. The alpha chain is a regulatory subunit. In Mycobacterium leprae (strain Br4923), this protein is ATP synthase subunit alpha.